We begin with the raw amino-acid sequence, 410 residues long: Toluene 1,2-dioxygenase system ferredoxin--NAD(+) reductase component (410 aa).

Residue 4 to 35 (HVAIIGNGVGGFTTAQALRAEGFEGRISLIGD) coordinates FAD. 145 to 173 (RLLIVGGGLIGCEVATTARKLGLSVTILE) lines the NAD(+) pocket.

It belongs to the bacterial ring-hydroxylating dioxygenase ferredoxin reductase family. As to quaternary structure, this dioxygenase system consists of four proteins: the two subunits of the hydroxylase component (todC1 and todC2), a ferredoxin (TodB) and a ferredoxin reductase (TodA). FAD serves as cofactor.

It catalyses the reaction 2 reduced [2Fe-2S]-[ferredoxin] + NAD(+) + H(+) = 2 oxidized [2Fe-2S]-[ferredoxin] + NADH. It participates in xenobiotic degradation; toluene degradation. Part of the electron transfer component of toluene 1,2-dioxygenase, transfers electrons from ferredoxin (TodB) to NADH. The polypeptide is Toluene 1,2-dioxygenase system ferredoxin--NAD(+) reductase component (todA) (Pseudomonas putida (strain ATCC 700007 / DSM 6899 / JCM 31910 / BCRC 17059 / LMG 24140 / F1)).